The following is a 737-amino-acid chain: Elongation factor 2 (737 aa).

The region spanning 18-262 is the tr-type G domain; that stretch reads TRVRNIGIIA…AVIKFVPNPR (245 aa). Residues 27-34, 93-97, and 147-150 contribute to the GTP site; these read AHVDHGKT, DTPGH, and NKVD. Residue H604 is modified to Diphthamide.

The protein belongs to the TRAFAC class translation factor GTPase superfamily. Classic translation factor GTPase family. EF-G/EF-2 subfamily.

It localises to the cytoplasm. Functionally, catalyzes the GTP-dependent ribosomal translocation step during translation elongation. During this step, the ribosome changes from the pre-translocational (PRE) to the post-translocational (POST) state as the newly formed A-site-bound peptidyl-tRNA and P-site-bound deacylated tRNA move to the P and E sites, respectively. Catalyzes the coordinated movement of the two tRNA molecules, the mRNA and conformational changes in the ribosome. The chain is Elongation factor 2 (fusA) from Sulfolobus acidocaldarius (strain ATCC 33909 / DSM 639 / JCM 8929 / NBRC 15157 / NCIMB 11770).